The primary structure comprises 537 residues: ATP-dependent 6-phosphofructokinase 5, chloroplastic (537 aa).

The transit peptide at 1 to 52 (MDALSQAISSGISVPYKNNSSSLVPSHGLTSLILRKSRSPVNPSSRSRVSVR) directs the protein to the chloroplast. The interval 35-64 (RKSRSPVNPSSRSRVSVRASEIQHSKTSAS) is disordered. Low complexity predominate over residues 39 to 54 (SPVNPSSRSRVSVRAS). The residue at position 147 (S147) is a Phosphoserine. Residues G189, 253–254 (RG), and 278–281 (GNGT) contribute to the ATP site. Residue N279 participates in Mg(2+) binding. Substrate contacts are provided by residues 307–309 (TID), 352–354 (MGR), E408, and 460–463 (YMIR). Catalysis depends on D309, which acts as the Proton acceptor.

This sequence belongs to the phosphofructokinase type A (PFKA) family. PPi-dependent PFK group II subfamily. Atypical ATP-dependent clade 'X' sub-subfamily. In terms of assembly, homotetramer. The cofactor is Mg(2+). Expressed in roots, leaves, stems and flowers.

It is found in the plastid. The protein resides in the chloroplast. It catalyses the reaction beta-D-fructose 6-phosphate + ATP = beta-D-fructose 1,6-bisphosphate + ADP + H(+). The protein operates within carbohydrate degradation; glycolysis; D-glyceraldehyde 3-phosphate and glycerone phosphate from D-glucose: step 3/4. Its activity is regulated as follows. Allosterically activated by AMP. Its function is as follows. Catalyzes the phosphorylation of D-fructose 6-phosphate to fructose 1,6-bisphosphate by ATP, the first committing step of glycolysis. The protein is ATP-dependent 6-phosphofructokinase 5, chloroplastic of Arabidopsis thaliana (Mouse-ear cress).